The primary structure comprises 349 residues: Shematrin-like protein 1 (349 aa).

The first 16 residues, 1–16 (MLKLVCAVFLIATVSA), serve as a signal peptide directing secretion.

In terms of tissue distribution, prismatic layer of shell (at protein level).

It localises to the secreted. The chain is Shematrin-like protein 1 from Margaritifera margaritifera (Freshwater pearl mussel).